Consider the following 102-residue polypeptide: Small ribosomal subunit protein uS10 (102 aa).

Belongs to the universal ribosomal protein uS10 family. As to quaternary structure, part of the 30S ribosomal subunit.

Functionally, involved in the binding of tRNA to the ribosomes. This is Small ribosomal subunit protein uS10 from Methylorubrum populi (strain ATCC BAA-705 / NCIMB 13946 / BJ001) (Methylobacterium populi).